A 103-amino-acid chain; its full sequence is Small ribosomal subunit protein uS10 (103 aa).

Belongs to the universal ribosomal protein uS10 family. As to quaternary structure, part of the 30S ribosomal subunit.

Its function is as follows. Involved in the binding of tRNA to the ribosomes. The polypeptide is Small ribosomal subunit protein uS10 (Bordetella petrii (strain ATCC BAA-461 / DSM 12804 / CCUG 43448)).